The following is a 317-amino-acid chain: Protein lifeguard 2 (317 aa).

The tract at residues 1–54 (MTQGKLSVANKAPGTEGQQHQANGEKKDAPAVPSAPPSYEEATSGEGLKAGTFP) is disordered. The next 3 membrane-spanning stretches (helical) occupy residues 107 to 127 (VYTI…LFTF), 139 to 159 (PGWY…LACC), and 166 to 186 (FPWN…LTGM). An N-linked (GlcNAc...) asparagine glycan is attached at Asn-192. 4 helical membrane-spanning segments follow: residues 195–215 (SVLL…IFSF), 226–246 (GVLF…AVLL), 252–272 (PWLH…FLAF), and 291–311 (IFGA…FLQL).

The protein belongs to the BI1 family. LFG subfamily. In terms of assembly, interacts with FAS/TNFRSF6 and BAX. As to expression, brain. Highly expressed in cerebellum, also found in cortex, olfactory bulb, and hippocampus.

The protein localises to the cell membrane. The protein resides in the membrane raft. Its subcellular location is the postsynaptic cell membrane. Functionally, antiapoptotic protein which protects cells uniquely from Fas-induced apoptosis. Regulates Fas-mediated apoptosis in neurons by interfering with caspase-8 activation. Plays a role in cerebellar development by affecting cerebellar size, internal granular layer (IGL) thickness, and Purkinje cell (PC) development. The chain is Protein lifeguard 2 (Faim2) from Mus musculus (Mouse).